A 154-amino-acid chain; its full sequence is Myoglobin (154 aa).

Residues methionine 1–alanine 147 enclose the Globin domain. Histidine 96 provides a ligand contact to heme b.

It belongs to the globin family.

The protein resides in the cytoplasm. In Nippostrongylus brasiliensis (Rat hookworm), this protein is Myoglobin (GLBB).